Here is a 695-residue protein sequence, read N- to C-terminus: uncharacterized protein (695 aa).

Disordered regions lie at residues 1 to 112 (MSRL…KHKK) and 242 to 262 (MKKV…NNDH). Low complexity predominate over residues 32 to 47 (DSSSSSDSPNFFPSSS). Residues 96 to 107 (KTEKEKEKEPIQ) are compositionally biased toward basic and acidic residues. The tr-type G domain maps to 278–492 (KPRTKLLLLG…KIDKEADTNH (215 aa)). GTP contacts are provided by residues 287-294 (GPPKSGKK), 357-361 (IFTTN), and 417-420 (TKMD).

The protein belongs to the TRAFAC class translation factor GTPase superfamily. Classic translation factor GTPase family.

It localises to the cytoplasm. The protein localises to the nucleus. This is an uncharacterized protein from Schizosaccharomyces pombe (strain 972 / ATCC 24843) (Fission yeast).